Here is a 429-residue protein sequence, read N- to C-terminus: Tryptophan synthase beta chain 2 (429 aa).

Positions Asn18–Glu40 are disordered. Lys110 is modified (N6-(pyridoxal phosphate)lysine).

This sequence belongs to the TrpB family. Tetramer of two alpha and two beta chains. Pyridoxal 5'-phosphate is required as a cofactor.

The enzyme catalyses (1S,2R)-1-C-(indol-3-yl)glycerol 3-phosphate + L-serine = D-glyceraldehyde 3-phosphate + L-tryptophan + H2O. It functions in the pathway amino-acid biosynthesis; L-tryptophan biosynthesis; L-tryptophan from chorismate: step 5/5. Its function is as follows. The beta subunit is responsible for the synthesis of L-tryptophan from indole and L-serine. This Methanothermobacter thermautotrophicus (strain ATCC 29096 / DSM 1053 / JCM 10044 / NBRC 100330 / Delta H) (Methanobacterium thermoautotrophicum) protein is Tryptophan synthase beta chain 2 (trpB2).